The primary structure comprises 177 residues: Large ribosomal subunit protein uL6 (177 aa).

The protein belongs to the universal ribosomal protein uL6 family. As to quaternary structure, part of the 50S ribosomal subunit.

Its function is as follows. This protein binds to the 23S rRNA, and is important in its secondary structure. It is located near the subunit interface in the base of the L7/L12 stalk, and near the tRNA binding site of the peptidyltransferase center. The polypeptide is Large ribosomal subunit protein uL6 (Cupriavidus necator (strain ATCC 17699 / DSM 428 / KCTC 22496 / NCIMB 10442 / H16 / Stanier 337) (Ralstonia eutropha)).